Here is a 562-residue protein sequence, read N- to C-terminus: Arginine--tRNA ligase (562 aa).

Positions 129–139 (ANPTGPLHVGH) match the 'HIGH' region motif.

This sequence belongs to the class-I aminoacyl-tRNA synthetase family. Monomer.

Its subcellular location is the cytoplasm. It carries out the reaction tRNA(Arg) + L-arginine + ATP = L-arginyl-tRNA(Arg) + AMP + diphosphate. This Xanthomonas axonopodis pv. citri (strain 306) protein is Arginine--tRNA ligase.